A 421-amino-acid chain; its full sequence is MNIDQHHQLQQQHQQQMLQQQAQAQAQAQAQAQQQQQQQQQAAAAAAAANAAATTSSSPRQVSFNVSDHYQILEIVGEGAYGIVCSAIHKPSQQKVAIKKIEPFERSMLCLRTLRELKLLKHFNHENIISILAIQRPINYESFNEIYLIQELMETDLHRVIRTQNLSDDHIQYFIYQTLRALKAMHSANVLHRDLKPSNLLLNSNCDLKICDFGLARSIASQEDNYGFMTEYVATRWYRAPEIMLTFQEYTTAIDVWSVGCILAEMLSGRPLFPGRDYHNQLWLIMEVLGTPNMEDYYNIKSKRAREYIRSLPFCKKIPFSELFANTNNNTSTSTSNTGGRTNINPLALDLLEKLLIFNPAKRITVEDALKHPYLQLYHDPNDEPISDKIPEDFFDFDKMKDQLTIEDLKKLLYEEIMKPL.

Positions Tyr70 to Leu375 constitute a Protein kinase domain. ATP is bound by residues Val76–Val84 and Lys99. Residue Asp194 is the Proton acceptor of the active site. Residue Thr230 is modified to Phosphothreonine. The TXY motif lies at Thr230–Tyr232. A Phosphotyrosine modification is found at Tyr232.

The protein belongs to the protein kinase superfamily. CMGC Ser/Thr protein kinase family. MAP kinase subfamily. Requires Mg(2+) as cofactor. Dually phosphorylated on Thr-230 and Tyr-232, which activates the enzyme.

The enzyme catalyses L-seryl-[protein] + ATP = O-phospho-L-seryl-[protein] + ADP + H(+). It carries out the reaction L-threonyl-[protein] + ATP = O-phospho-L-threonyl-[protein] + ADP + H(+). With respect to regulation, activated by tyrosine and threonine phosphorylation. The chain is Extracellular signal-regulated kinase 1 (CEK1) from Candida albicans (strain SC5314 / ATCC MYA-2876) (Yeast).